The chain runs to 476 residues: Glutamate--tRNA ligase (476 aa).

The short motif at 9–19 (PSPTGTLHLGT) is the 'HIGH' region element. A 'KMSKS' region motif is present at residues 248-252 (KLSKR). Lysine 251 contributes to the ATP binding site.

This sequence belongs to the class-I aminoacyl-tRNA synthetase family. Glutamate--tRNA ligase type 1 subfamily. In terms of assembly, monomer.

It is found in the cytoplasm. It carries out the reaction tRNA(Glu) + L-glutamate + ATP = L-glutamyl-tRNA(Glu) + AMP + diphosphate. Its function is as follows. Catalyzes the attachment of glutamate to tRNA(Glu) in a two-step reaction: glutamate is first activated by ATP to form Glu-AMP and then transferred to the acceptor end of tRNA(Glu). The protein is Glutamate--tRNA ligase of Prochlorococcus marinus (strain NATL1A).